Reading from the N-terminus, the 344-residue chain is Phenylalanine--tRNA ligase alpha subunit (344 aa).

Glu-255 contributes to the Mg(2+) binding site.

This sequence belongs to the class-II aminoacyl-tRNA synthetase family. Phe-tRNA synthetase alpha subunit type 1 subfamily. As to quaternary structure, tetramer of two alpha and two beta subunits. Mg(2+) serves as cofactor.

The protein resides in the cytoplasm. It catalyses the reaction tRNA(Phe) + L-phenylalanine + ATP = L-phenylalanyl-tRNA(Phe) + AMP + diphosphate + H(+). This is Phenylalanine--tRNA ligase alpha subunit from Sulfurihydrogenibium sp. (strain YO3AOP1).